Reading from the N-terminus, the 433-residue chain is Cell adhesion molecule 2 (433 aa).

Positions 1-24 (MILQPSALLCLSSLWGVIVQASQG) are cleaved as a signal peptide. The Extracellular portion of the chain corresponds to 25-365 (QFPVTQNVTV…ALPGPVATDH (341 aa)). In terms of domain architecture, Ig-like V-type spans 27–114 (PVTQNVTVVE…SLFTMPVKTS (88 aa)). N-linked (GlcNAc...) asparagine glycans are attached at residues Asn31, Asn41, and Asn51. Disulfide bonds link Cys44–Cys104, Cys146–Cys203, and Cys248–Cys296. Ig-like C2-type domains lie at 127–217 (PHIS…PQIA) and 227–312 (PTVR…YVLI). 2 N-linked (GlcNAc...) asparagine glycosylation sites follow: Asn287 and Asn291. The helical transmembrane segment at 366–386 (ALIGGVVAVVVFVTLCSIILI) threads the bilayer. Over 387–433 (GRYLARHKGTYLTNEAKGAEDAPDADTAIINAEGSQVNAEEKKEYFI) the chain is Cytoplasmic.

This sequence belongs to the nectin family.

Its subcellular location is the membrane. This Xenopus tropicalis (Western clawed frog) protein is Cell adhesion molecule 2 (cadm2).